Reading from the N-terminus, the 229-residue chain is Cytidylate kinase (229 aa).

Residue 7-15 (GPAGAGKSS) participates in ATP binding.

It belongs to the cytidylate kinase family. Type 1 subfamily.

Its subcellular location is the cytoplasm. It catalyses the reaction CMP + ATP = CDP + ADP. It carries out the reaction dCMP + ATP = dCDP + ADP. The polypeptide is Cytidylate kinase (Rhodopirellula baltica (strain DSM 10527 / NCIMB 13988 / SH1)).